The primary structure comprises 213 residues: Ribonuclease T (213 aa).

The Exonuclease domain occupies 28-202 (VVVDVETGGF…YDTEQTARLF (175 aa)). Positions 31, 33, 189, and 194 each coordinate Mg(2+). Residue His189 is the Proton donor/acceptor of the active site.

It belongs to the RNase T family. Homodimer. Mg(2+) serves as cofactor.

Trims short 3' overhangs of a variety of RNA species, leaving a one or two nucleotide 3' overhang. Responsible for the end-turnover of tRNA: specifically removes the terminal AMP residue from uncharged tRNA (tRNA-C-C-A). Also appears to be involved in tRNA biosynthesis. The polypeptide is Ribonuclease T (Xanthomonas euvesicatoria pv. vesicatoria (strain 85-10) (Xanthomonas campestris pv. vesicatoria)).